A 166-amino-acid polypeptide reads, in one-letter code: UPF0336 protein MT0525.1 (166 aa).

Positions 8–131 (QTLIGKHYRA…VLAEIRSEVT (124 aa)) constitute a MaoC-like domain.

Belongs to the UPF0336 family.

The chain is UPF0336 protein MT0525.1 from Mycobacterium tuberculosis (strain CDC 1551 / Oshkosh).